An 844-amino-acid chain; its full sequence is Beta-mannosidase B (844 aa).

E432 serves as the catalytic Proton donor.

The protein belongs to the glycosyl hydrolase 2 family. Beta-mannosidase B subfamily.

The catalysed reaction is Hydrolysis of terminal, non-reducing beta-D-mannose residues in beta-D-mannosides.. It participates in glycan metabolism; N-glycan degradation. Functionally, exoglycosidase that cleaves the single beta-linked mannose residue from the non-reducing end of beta-mannosidic oligosaccharides of various complexity and length. Prefers mannobiose over mannotriose and has no activity against polymeric mannan. Is also severely restricted by galactosyl substitutions at the +1 subsite. In Aspergillus oryzae (strain ATCC 42149 / RIB 40) (Yellow koji mold), this protein is Beta-mannosidase B (mndB).